The following is a 171-amino-acid chain: uncharacterized protein (171 aa).

It belongs to the mimivirus L87/L94 family.

This is an uncharacterized protein from Acanthamoeba polyphaga (Amoeba).